The chain runs to 170 residues: Adenine phosphoribosyltransferase (170 aa).

This sequence belongs to the purine/pyrimidine phosphoribosyltransferase family. Homodimer.

The protein localises to the cytoplasm. The catalysed reaction is AMP + diphosphate = 5-phospho-alpha-D-ribose 1-diphosphate + adenine. It functions in the pathway purine metabolism; AMP biosynthesis via salvage pathway; AMP from adenine: step 1/1. Its function is as follows. Catalyzes a salvage reaction resulting in the formation of AMP, that is energically less costly than de novo synthesis. This Carboxydothermus hydrogenoformans (strain ATCC BAA-161 / DSM 6008 / Z-2901) protein is Adenine phosphoribosyltransferase.